The sequence spans 655 residues: Tetratricopeptide repeat protein 30 homolog (655 aa).

TPR repeat units lie at residues 10–43 (EGHV…ANTR), 44–76 (AGLS…APKE), 143–176 (ADTL…GGFN), 178–210 (LVAY…GMRN), 385–418 (LAAK…YLPV), 450–484 (SIWR…HSDD), and 534–567 (CIVN…GSGN).

Belongs to the TTC30/dfy-1/fleer family.

Its subcellular location is the cell projection. The protein resides in the cilium. Its function is as follows. Required for polyglutamylation of axonemal tubulin in sensory cilia. Plays a role in anterograde intraflagellar transport (IFT), the process by which cilia precursors are transported from the base of the cilium to the site of their incorporation at the tip. The chain is Tetratricopeptide repeat protein 30 homolog from Drosophila melanogaster (Fruit fly).